The following is a 295-amino-acid chain: Large ribosomal subunit protein uL15m (295 aa).

A mitochondrion-targeting transit peptide spans 1-20 (MAGTARGCGTSLDLLRSLPR). The interval 21 to 67 (VSLANLKPSPNSRKRERRPRDRRRGRKCGRGHKGERQRGTRPRLGFE) is disordered. Positions 32-51 (SRKRERRPRDRRRGRKCGRG) are enriched in basic residues.

The protein belongs to the universal ribosomal protein uL15 family. As to quaternary structure, component of the mitochondrial ribosome large subunit (39S) which comprises a 16S rRNA and about 50 distinct proteins.

It localises to the mitochondrion. This is Large ribosomal subunit protein uL15m (Mrpl15) from Mus musculus (Mouse).